Here is a 409-residue protein sequence, read N- to C-terminus: Transforming growth factor beta-3 proprotein (409 aa).

The signal sequence occupies residues 1-21; the sequence is MHLQRALVVLALLNFATVSLS. N-linked (GlcNAc...) asparagine glycans are attached at residues Asn72, Asn133, and Asn140. A Cell attachment site motif is present at residues 259-261; it reads RGD. 4 cysteine pairs are disulfide-bonded: Cys304–Cys313, Cys312–Cys375, Cys341–Cys406, and Cys345–Cys408.

The protein belongs to the TGF-beta family. Interacts with ASPN. Latency-associated peptide: Homodimer; disulfide-linked. Latency-associated peptide: Interacts with Transforming growth factor beta-3 (TGF-beta-3) chain; interaction is non-covalent and maintains (TGF-beta-3) in a latent state. Latency-associated peptide: Interacts with LRRC32/GARP; leading to regulate activation of TGF-beta-3 and promote epithelial fusion during palate development. Latency-associated peptide: Interacts (via cell attachment site) with integrins, leading to release of the active TGF-beta-3. Transforming growth factor beta-3: Homodimer; disulfide-linked. Transforming growth factor beta-3: Interacts with TGF-beta receptors (TGFBR1 and TGFBR2), leading to signal transduction. In terms of processing, transforming growth factor beta-3 proprotein: The precursor proprotein is cleaved in the Golgi apparatus to form Transforming growth factor beta-3 (TGF-beta-3) and Latency-associated peptide (LAP) chains, which remain non-covalently linked, rendering TGF-beta-3 inactive.

The protein resides in the secreted. Its subcellular location is the extracellular space. It localises to the extracellular matrix. Transforming growth factor beta-3 proprotein: Precursor of the Latency-associated peptide (LAP) and Transforming growth factor beta-3 (TGF-beta-3) chains, which constitute the regulatory and active subunit of TGF-beta-3, respectively. Functionally, required to maintain the Transforming growth factor beta-3 (TGF-beta-3) chain in a latent state during storage in extracellular matrix. Associates non-covalently with TGF-beta-3 and regulates its activation via interaction with 'milieu molecules', such as LTBP1 and LRRC32/GARP, that control activation of TGF-beta-3. Interaction with integrins results in distortion of the Latency-associated peptide chain and subsequent release of the active TGF-beta-3. Its function is as follows. Transforming growth factor beta-3: Multifunctional protein that regulates embryogenesis and cell differentiation and is required in various processes such as secondary palate development. Activation into mature form follows different steps: following cleavage of the proprotein in the Golgi apparatus, Latency-associated peptide (LAP) and Transforming growth factor beta-3 (TGF-beta-3) chains remain non-covalently linked rendering TGF-beta-3 inactive during storage in extracellular matrix. At the same time, LAP chain interacts with 'milieu molecules', such as LTBP1 and LRRC32/GARP that control activation of TGF-beta-3 and maintain it in a latent state during storage in extracellular milieus. TGF-beta-3 is released from LAP by integrins: integrin-binding results in distortion of the LAP chain and subsequent release of the active TGF-beta-3. Once activated following release of LAP, TGF-beta-3 acts by binding to TGF-beta receptors (TGFBR1 and TGFBR2), which transduce signal. The polypeptide is Transforming growth factor beta-3 proprotein (TGFB3) (Sus scrofa (Pig)).